A 126-amino-acid chain; its full sequence is Large ribosomal subunit protein bL12 (126 aa).

The protein belongs to the bacterial ribosomal protein bL12 family. Homodimer. Part of the ribosomal stalk of the 50S ribosomal subunit. Forms a multimeric L10(L12)X complex, where L10 forms an elongated spine to which 2 to 4 L12 dimers bind in a sequential fashion. Binds GTP-bound translation factors.

Forms part of the ribosomal stalk which helps the ribosome interact with GTP-bound translation factors. Is thus essential for accurate translation. The protein is Large ribosomal subunit protein bL12 of Blochmanniella floridana.